A 179-amino-acid polypeptide reads, in one-letter code: Replication restart protein DnaT (179 aa).

Residues 156–179 (GGLPKRDVNTVSEPDSQIPPGFRG) form a disordered region.

This sequence belongs to the DnaT family. As to quaternary structure, homooligomerizes. Interacts with PriB. Component of the replication restart primosome. Primosome assembly occurs via a 'hand-off' mechanism. PriA binds to replication forks, subsequently PriB then DnaT bind; DnaT then displaces ssDNA to generate the helicase loading substrate.

Involved in the restart of stalled replication forks, which reloads the replicative helicase on sites other than the origin of replication. Can function in multiple replication restart pathways. Displaces ssDNA from a PriB-ssDNA complex. Probably forms a spiral filament on ssDNA. In Escherichia coli O17:K52:H18 (strain UMN026 / ExPEC), this protein is Replication restart protein DnaT.